Consider the following 585-residue polypeptide: Putative indole-3-acetic acid-amido synthetase GH3.9 (585 aa).

It belongs to the IAA-amido conjugating enzyme family.

Catalyzes the synthesis of indole-3-acetic acid (IAA)-amino acid conjugates, providing a mechanism for the plant to cope with the presence of excess auxin. The protein is Putative indole-3-acetic acid-amido synthetase GH3.9 (GH3.9) of Arabidopsis thaliana (Mouse-ear cress).